Consider the following 338-residue polypeptide: 1-aminocyclopropane-1-carboxylate deaminase (338 aa).

Lys-51 carries the post-translational modification N6-(pyridoxal phosphate)lysine. Ser-78 serves as the catalytic Nucleophile.

It belongs to the ACC deaminase/D-cysteine desulfhydrase family. Homotrimer. It depends on pyridoxal 5'-phosphate as a cofactor.

The catalysed reaction is 1-aminocyclopropane-1-carboxylate + H2O = 2-oxobutanoate + NH4(+). Its function is as follows. Catalyzes a cyclopropane ring-opening reaction, the irreversible conversion of 1-aminocyclopropane-1-carboxylate (ACC) to ammonia and alpha-ketobutyrate. Allows growth on ACC as a nitrogen source. The protein is 1-aminocyclopropane-1-carboxylate deaminase of Burkholderia multivorans (strain ATCC 17616 / 249).